A 146-amino-acid polypeptide reads, in one-letter code: Hemoglobin subunit beta (146 aa).

The residue at position 1 (Val-1) is an N-acetylvaline. Positions 2 to 146 (HLTDAEKAAI…VASALAHKYH (145 aa)) constitute a Globin domain. His-63 lines the heme b pocket. Lys-82 carries the N6-acetyllysine modification. His-92 contributes to the heme b binding site. An S-nitrosocysteine modification is found at Cys-93. Position 144 is an N6-acetyllysine (Lys-144).

Belongs to the globin family. In terms of assembly, heterotetramer of two alpha chains and two beta chains. As to expression, red blood cells.

In terms of biological role, involved in oxygen transport from the lung to the various peripheral tissues. The sequence is that of Hemoglobin subunit beta (HBB) from Microtus xanthognathus (Yellow-cheeked vole).